We begin with the raw amino-acid sequence, 123 residues long: Anti-lipopolysaccharide factor (123 aa).

The first 26 residues, 1 to 26, serve as a signal peptide directing secretion; it reads MRTRVMAGLCVALVVMCLYMPQPCEA. Cysteine 55 and cysteine 76 form a disulfide bridge.

As to expression, strong expression in hemocytes, heart and muscle, with weaker expression detected in gills and hepatopancreas. No expression detected in eyes.

It is found in the secreted. Functionally, binds to bacterial LPS and may specifically inhibit the LPS-mediated activation of the hemolymph coagulation. It has a strong antibacterial effect especially on the growth of Gram-negative bacteria. This is Anti-lipopolysaccharide factor from Scylla serrata (Mud crab).